The chain runs to 91 residues: Probable Fe(2+)-trafficking protein (91 aa).

It belongs to the Fe(2+)-trafficking protein family.

In terms of biological role, could be a mediator in iron transactions between iron acquisition and iron-requiring processes, such as synthesis and/or repair of Fe-S clusters in biosynthetic enzymes. This is Probable Fe(2+)-trafficking protein from Glaesserella parasuis serovar 5 (strain SH0165) (Haemophilus parasuis).